Consider the following 264-residue polypeptide: MTMGDDLWGWQNINGSPYLTCALLAPWPHAFFTRAFYPQLPEQLITYLDPQGKAFRVKQVHGDVTLTATEIGQTPLAPDSTHPPADGIISDAPHQGVWVASADCTPVLIGDLIGKRVAAIHAGWRGTKARIVPKTIDKFLALGSELKDLRVALGPAIAGEVYQVDPWVALEVGQSVQAVQKLATEEQQWDHLSTMVNPPVLPDAEPEKYRLDVRRINQLQLLELGFAQEQIAVAPHCTFQMEELFFSYRRTHTKEVQWSGIVSY.

3 residues coordinate Zn(2+): H61, C104, and H121.

This sequence belongs to the purine nucleoside phosphorylase YfiH/LACC1 family. In terms of assembly, homodimer. The cofactor is Cu(2+). Requires Zn(2+) as cofactor.

The catalysed reaction is adenosine + phosphate = alpha-D-ribose 1-phosphate + adenine. The enzyme catalyses S-methyl-5'-thioadenosine + phosphate = 5-(methylsulfanyl)-alpha-D-ribose 1-phosphate + adenine. It catalyses the reaction inosine + phosphate = alpha-D-ribose 1-phosphate + hypoxanthine. It carries out the reaction adenosine + H2O + H(+) = inosine + NH4(+). Purine nucleoside enzyme that catalyzes the phosphorolysis of adenosine and inosine nucleosides, yielding D-ribose 1-phosphate and the respective free bases, adenine and hypoxanthine. Also catalyzes the phosphorolysis of S-methyl-5'-thioadenosine into adenine and S-methyl-5-thio-alpha-D-ribose 1-phosphate. Also has adenosine deaminase activity. This is Purine nucleoside phosphorylase slr1573 from Synechocystis sp. (strain ATCC 27184 / PCC 6803 / Kazusa).